The following is a 1296-amino-acid chain: DNA-directed RNA polymerase subunit beta' (1296 aa).

Zn(2+)-binding residues include cysteine 60, cysteine 62, cysteine 75, and cysteine 78. Mg(2+)-binding residues include aspartate 535, aspartate 537, and aspartate 539. Residues cysteine 877, cysteine 954, cysteine 961, and cysteine 964 each contribute to the Zn(2+) site.

This sequence belongs to the RNA polymerase beta' chain family. In terms of assembly, the RNAP catalytic core consists of 2 alpha, 1 beta, 1 beta' and 1 omega subunit. When a sigma factor is associated with the core the holoenzyme is formed, which can initiate transcription. It depends on Mg(2+) as a cofactor. Zn(2+) serves as cofactor.

It catalyses the reaction RNA(n) + a ribonucleoside 5'-triphosphate = RNA(n+1) + diphosphate. Functionally, DNA-dependent RNA polymerase catalyzes the transcription of DNA into RNA using the four ribonucleoside triphosphates as substrates. This Beutenbergia cavernae (strain ATCC BAA-8 / DSM 12333 / CCUG 43141 / JCM 11478 / NBRC 16432 / NCIMB 13614 / HKI 0122) protein is DNA-directed RNA polymerase subunit beta'.